The chain runs to 633 residues: Glutamyl-tRNA(Gln) amidotransferase subunit E (633 aa).

It belongs to the GatB/GatE family. GatE subfamily. As to quaternary structure, heterodimer of GatD and GatE.

It catalyses the reaction L-glutamyl-tRNA(Gln) + L-glutamine + ATP + H2O = L-glutaminyl-tRNA(Gln) + L-glutamate + ADP + phosphate + H(+). Its function is as follows. Allows the formation of correctly charged Gln-tRNA(Gln) through the transamidation of misacylated Glu-tRNA(Gln) in organisms which lack glutaminyl-tRNA synthetase. The reaction takes place in the presence of glutamine and ATP through an activated gamma-phospho-Glu-tRNA(Gln). The GatDE system is specific for glutamate and does not act on aspartate. The protein is Glutamyl-tRNA(Gln) amidotransferase subunit E of Saccharolobus islandicus (strain L.S.2.15 / Lassen #1) (Sulfolobus islandicus).